Consider the following 318-residue polypeptide: Coproporphyrin III ferrochelatase (318 aa).

Residues His186 and Glu268 each coordinate Fe(2+).

The protein belongs to the ferrochelatase family.

It localises to the cytoplasm. The catalysed reaction is Fe-coproporphyrin III + 2 H(+) = coproporphyrin III + Fe(2+). Its pathway is porphyrin-containing compound metabolism; protoheme biosynthesis. In terms of biological role, involved in coproporphyrin-dependent heme b biosynthesis. Catalyzes the insertion of ferrous iron into coproporphyrin III to form Fe-coproporphyrin III. The polypeptide is Coproporphyrin III ferrochelatase (Lactococcus lactis subsp. cremoris (strain SK11)).